We begin with the raw amino-acid sequence, 216 residues long: Ribosomal RNA large subunit methyltransferase E (216 aa).

G67, W69, D87, D103, and D128 together coordinate S-adenosyl-L-methionine. Catalysis depends on K168, which acts as the Proton acceptor.

The protein belongs to the class I-like SAM-binding methyltransferase superfamily. RNA methyltransferase RlmE family.

The protein resides in the cytoplasm. The catalysed reaction is uridine(2552) in 23S rRNA + S-adenosyl-L-methionine = 2'-O-methyluridine(2552) in 23S rRNA + S-adenosyl-L-homocysteine + H(+). Specifically methylates the uridine in position 2552 of 23S rRNA at the 2'-O position of the ribose in the fully assembled 50S ribosomal subunit. In Acinetobacter baumannii (strain AB307-0294), this protein is Ribosomal RNA large subunit methyltransferase E.